The following is a 312-amino-acid chain: Ribonuclease Z (312 aa).

H63, H65, D67, H68, H141, D212, and H270 together coordinate Zn(2+). D67 serves as the catalytic Proton acceptor.

Belongs to the RNase Z family. Homodimer. It depends on Zn(2+) as a cofactor.

The enzyme catalyses Endonucleolytic cleavage of RNA, removing extra 3' nucleotides from tRNA precursor, generating 3' termini of tRNAs. A 3'-hydroxy group is left at the tRNA terminus and a 5'-phosphoryl group is left at the trailer molecule.. Its function is as follows. Zinc phosphodiesterase, which displays some tRNA 3'-processing endonuclease activity. Probably involved in tRNA maturation, by removing a 3'-trailer from precursor tRNA. The chain is Ribonuclease Z from Lactobacillus helveticus (strain DPC 4571).